Reading from the N-terminus, the 640-residue chain is Threonine--tRNA ligase (640 aa).

The 61-residue stretch at 1 to 61 (MPTITLPDGS…ENDASLQIIT (61 aa)) folds into the TGS domain. The interval 242–533 (DHRKIGKRLG…LIEHYEGAFP (292 aa)) is catalytic. The Zn(2+) site is built by Cys333, His384, and His510.

It belongs to the class-II aminoacyl-tRNA synthetase family. As to quaternary structure, homodimer. It depends on Zn(2+) as a cofactor.

Its subcellular location is the cytoplasm. The enzyme catalyses tRNA(Thr) + L-threonine + ATP = L-threonyl-tRNA(Thr) + AMP + diphosphate + H(+). In terms of biological role, catalyzes the attachment of threonine to tRNA(Thr) in a two-step reaction: L-threonine is first activated by ATP to form Thr-AMP and then transferred to the acceptor end of tRNA(Thr). Also edits incorrectly charged L-seryl-tRNA(Thr). The chain is Threonine--tRNA ligase from Pseudomonas syringae pv. syringae (strain B728a).